Reading from the N-terminus, the 160-residue chain is Large ribosomal subunit protein eL21B (160 aa).

The disordered stretch occupies residues 114–140 (AKRKEAKAQGKTVQLRRQPAPPATAHF).

It belongs to the eukaryotic ribosomal protein eL21 family. As to quaternary structure, component of the large ribosomal subunit (LSU). Mature yeast ribosomes consist of a small (40S) and a large (60S) subunit. The 40S small subunit contains 1 molecule of ribosomal RNA (18S rRNA) and at least 33 different proteins. The large 60S subunit contains 3 rRNA molecules (25S, 5.8S and 5S rRNA) and at least 46 different proteins.

It localises to the cytoplasm. Its function is as follows. Component of the ribosome, a large ribonucleoprotein complex responsible for the synthesis of proteins in the cell. The small ribosomal subunit (SSU) binds messenger RNAs (mRNAs) and translates the encoded message by selecting cognate aminoacyl-transfer RNA (tRNA) molecules. The large subunit (LSU) contains the ribosomal catalytic site termed the peptidyl transferase center (PTC), which catalyzes the formation of peptide bonds, thereby polymerizing the amino acids delivered by tRNAs into a polypeptide chain. The nascent polypeptides leave the ribosome through a tunnel in the LSU and interact with protein factors that function in enzymatic processing, targeting, and the membrane insertion of nascent chains at the exit of the ribosomal tunnel. The sequence is that of Large ribosomal subunit protein eL21B (rpl2102) from Schizosaccharomyces pombe (strain 972 / ATCC 24843) (Fission yeast).